The following is a 137-amino-acid chain: Envelope glycoprotein L (137 aa).

Positions 1–22 (MRAVGVFLAICLVTIFVLPTWG) are cleaved as a signal peptide. Positions 23 to 128 (NWAYPCCHVT…SVEDLFGANL (106 aa)) are interaction with gH. Disulfide bonds link Cys-28/Cys-56 and Cys-29/Cys-79.

This sequence belongs to the herpesviridae glycoprotein L family. Interacts with glycoprotein H (gH); this interaction is necessary for the correct processing and cell surface expression of gH. The heterodimer gH/gL seems to interact with gB trimers during fusion. The heterodimer gH/gL interacts with host EPHA2 to facilitate virus internalization and fusion.

Its subcellular location is the virion membrane. It is found in the host cell membrane. It localises to the host Golgi apparatus. The protein resides in the host trans-Golgi network. Functionally, the heterodimer glycoprotein H-glycoprotein L is required for the fusion of viral and plasma membranes leading to virus entry into the host cell. Acts as a functional inhibitor of gH and maintains gH in an inhibited form. Upon binding to host integrins, gL dissociates from gH leading to activation of the viral fusion glycoproteins gB and gH. Fusion of EBV with B-lymphocytes requires the additional receptor-binding protein gp42, which forms a complex with gH/gL. The heterodimer gH/gL targets also host EPHA2 to promote viral entry. The polypeptide is Envelope glycoprotein L (Homo sapiens (Human)).